Here is a 125-residue protein sequence, read N- to C-terminus: Small ribosomal subunit protein uS12 (125 aa).

A 3-methylthioaspartic acid modification is found at aspartate 89. The interval 105–125 is disordered; the sequence is AGVKDRKQARSKYGAKRPKAA. Residues 113-125 are compositionally biased toward basic residues; the sequence is ARSKYGAKRPKAA.

Belongs to the universal ribosomal protein uS12 family. Part of the 30S ribosomal subunit. Contacts proteins S8 and S17. May interact with IF1 in the 30S initiation complex.

With S4 and S5 plays an important role in translational accuracy. In terms of biological role, interacts with and stabilizes bases of the 16S rRNA that are involved in tRNA selection in the A site and with the mRNA backbone. Located at the interface of the 30S and 50S subunits, it traverses the body of the 30S subunit contacting proteins on the other side and probably holding the rRNA structure together. The combined cluster of proteins S8, S12 and S17 appears to hold together the shoulder and platform of the 30S subunit. This Methylobacillus flagellatus (strain ATCC 51484 / DSM 6875 / VKM B-1610 / KT) protein is Small ribosomal subunit protein uS12.